Here is a 258-residue protein sequence, read N- to C-terminus: Phosphate import ATP-binding protein PstB (258 aa).

Residues Ile5–Gln247 enclose the ABC transporter domain. An ATP-binding site is contributed by Gly37–Ser44.

This sequence belongs to the ABC transporter superfamily. Phosphate importer (TC 3.A.1.7) family. In terms of assembly, the complex is composed of two ATP-binding proteins (PstB), two transmembrane proteins (PstC and PstA) and a solute-binding protein (PstS).

The protein resides in the cell membrane. It carries out the reaction phosphate(out) + ATP + H2O = ADP + 2 phosphate(in) + H(+). Its function is as follows. Part of the ABC transporter complex PstSACB involved in phosphate import. Responsible for energy coupling to the transport system. The polypeptide is Phosphate import ATP-binding protein PstB (Streptomyces avermitilis (strain ATCC 31267 / DSM 46492 / JCM 5070 / NBRC 14893 / NCIMB 12804 / NRRL 8165 / MA-4680)).